The following is a 346-amino-acid chain: Holliday junction branch migration complex subunit RuvB (346 aa).

The interval 1 to 182 is large ATPase domain (RuvB-L); it reads MKIELLNTPA…FGISSRFDYY (182 aa). Residues isoleucine 21, arginine 22, glycine 63, lysine 66, threonine 67, threonine 68, 129 to 131, arginine 172, tyrosine 182, and arginine 219 contribute to the ATP site; that span reads EDF. Residue threonine 67 coordinates Mg(2+). The interval 183 to 253 is small ATPAse domain (RuvB-S); sequence PPELLERIIL…IAMTTLASLE (71 aa). The head domain (RuvB-H) stretch occupies residues 256 to 346; it reads EEGLDDMDKK…GPLFDAAPAR (91 aa). Residues arginine 311 and arginine 316 each contribute to the DNA site.

The protein belongs to the RuvB family. Homohexamer. Forms an RuvA(8)-RuvB(12)-Holliday junction (HJ) complex. HJ DNA is sandwiched between 2 RuvA tetramers; dsDNA enters through RuvA and exits via RuvB. An RuvB hexamer assembles on each DNA strand where it exits the tetramer. Each RuvB hexamer is contacted by two RuvA subunits (via domain III) on 2 adjacent RuvB subunits; this complex drives branch migration. In the full resolvosome a probable DNA-RuvA(4)-RuvB(12)-RuvC(2) complex forms which resolves the HJ.

It is found in the cytoplasm. The enzyme catalyses ATP + H2O = ADP + phosphate + H(+). In terms of biological role, the RuvA-RuvB-RuvC complex processes Holliday junction (HJ) DNA during genetic recombination and DNA repair, while the RuvA-RuvB complex plays an important role in the rescue of blocked DNA replication forks via replication fork reversal (RFR). RuvA specifically binds to HJ cruciform DNA, conferring on it an open structure. The RuvB hexamer acts as an ATP-dependent pump, pulling dsDNA into and through the RuvAB complex. RuvB forms 2 homohexamers on either side of HJ DNA bound by 1 or 2 RuvA tetramers; 4 subunits per hexamer contact DNA at a time. Coordinated motions by a converter formed by DNA-disengaged RuvB subunits stimulates ATP hydrolysis and nucleotide exchange. Immobilization of the converter enables RuvB to convert the ATP-contained energy into a lever motion, pulling 2 nucleotides of DNA out of the RuvA tetramer per ATP hydrolyzed, thus driving DNA branch migration. The RuvB motors rotate together with the DNA substrate, which together with the progressing nucleotide cycle form the mechanistic basis for DNA recombination by continuous HJ branch migration. Branch migration allows RuvC to scan DNA until it finds its consensus sequence, where it cleaves and resolves cruciform DNA. This is Holliday junction branch migration complex subunit RuvB from Chlorobium phaeobacteroides (strain DSM 266 / SMG 266 / 2430).